The chain runs to 315 residues: Beta-carotene hydroxylase 1, chloroplastic (315 aa).

Residues 1–58 constitute a chloroplast transit peptide; the sequence is MAAEISISASSRAICLQRNPFPAPKYFATAPPLLFFSPLTCNLDAILRSRRKPRLAAC. Helical transmembrane passes span 112-132 and 146-166; these read YLVA…ISVY and FSEM…MEYW. Residues 159 to 286 form the Fatty acid hydroxylase domain; it reads AAIGMEYWAR…KFDGVPYGLF (128 aa). A Histidine box-1 motif is present at residues 171 to 176; the sequence is HRALWH. The Histidine box-2 motif lies at 183–187; the sequence is HESHH. A run of 2 helical transmembrane segments spans residues 196–216 and 222–242; these read LNDI…SFGF and IPGL…AYMF. Residues 244–249 carry the Histidine box-3 motif; that stretch reads HDGLVH. The Histidine box-4 signature appears at 270–274; that stretch reads HQLHH.

The protein belongs to the sterol desaturase family.

The protein resides in the plastid. It is found in the chloroplast membrane. The catalysed reaction is all-trans-beta-carotene + 4 reduced [2Fe-2S]-[ferredoxin] + 2 O2 + 4 H(+) = all-trans-zeaxanthin + 4 oxidized [2Fe-2S]-[ferredoxin] + 2 H2O. The enzyme catalyses all-trans-beta-carotene + 2 reduced [2Fe-2S]-[ferredoxin] + O2 + 2 H(+) = beta-cryptoxanthin + 2 oxidized [2Fe-2S]-[ferredoxin] + H2O. It catalyses the reaction beta-cryptoxanthin + 2 reduced [2Fe-2S]-[ferredoxin] + O2 + 2 H(+) = all-trans-zeaxanthin + 2 oxidized [2Fe-2S]-[ferredoxin] + H2O. Its activity is regulated as follows. Inhibited by o-phenanthroline and 8-hydroxyquinoline. Functionally, nonheme diiron monooxygenase involved in the biosynthesis of xanthophylls. Specific for beta-ring hydroxylations of beta-carotene. Produces beta-cryptoxanthin and zeaxanthin. Uses ferredoxin as an electron donor. The polypeptide is Beta-carotene hydroxylase 1, chloroplastic (Capsicum annuum (Capsicum pepper)).